A 1100-amino-acid chain; its full sequence is Collagen alpha-2(I) chain (1100 aa).

Residues 1–982 (QYDGVKAPDP…PGPAGGGYDV (982 aa)) are disordered. Low complexity-rich tracts occupy residues 122-170 (EPGA…AAGP), 200-209 (EPGPNGAVGP), and 216-237 (PGNN…AGAP). The segment covering 239-249 (FPGPRGGPGPQ) has biased composition (pro residues). Positions 251 to 261 (PQGAAGQRGLA) are enriched in low complexity. A compositionally biased stretch (gly residues) spans 268–277 (GVKGDGGPKG). Low complexity-rich tracts occupy residues 333-352 (MPGA…PGDA), 358-385 (SGPA…AGPA), 435-448 (APGP…TGAT), and 460-472 (QGAS…QGLP). Residues 473–482 (GPAGGAGEAG) are compositionally biased toward gly residues. Residues 507–517 (NPGAAGASGPQ) are compositionally biased toward low complexity. A compositionally biased stretch (gly residues) spans 530–557 (GTDGGKGEPGAAGAAGGPGHQGPGGMPG). Basic and acidic residues predominate over residues 568–579 (KGEKGEGGHRGP). The span at 633 to 646 (PAGAPGFAGPPGAD) shows a compositional bias: low complexity. The span at 656 to 665 (GPSGGKGESG) shows a compositional bias: gly residues. Composition is skewed to low complexity over residues 666-691 (PSGP…TGAR), 702-729 (FPGA…PAGK), and 757-775 (SGEK…LGLQ). A compositionally biased stretch (gly residues) spans 788–797 (GSPGGAGAVG). Composition is skewed to low complexity over residues 798–820 (EAGR…LGLP) and 854–866 (AGPT…PGNR). Gly residues predominate over residues 867–876 (GESGPGGAAG). The span at 877–892 (AVGPAGARGAAGPSGP) shows a compositional bias: low complexity. Residues 893 to 907 (RGEKGVAGEKGERGM) show a composition bias toward basic and acidic residues. A compositionally biased stretch (low complexity) spans 916–935 (LQGMPGPSGPSGDTGSAGPN). One can recognise a Fibrillar collagen NC1 domain in the interval 1071–1100 (TRLPLLDLAPLDLGGADQEFGLDLGPVCFK).

It belongs to the fibrillar collagen family.

Its subcellular location is the secreted. It is found in the extracellular space. The protein resides in the extracellular matrix. This is Collagen alpha-2(I) chain from Epinephelus caninus (Dogtooth grouper).